Reading from the N-terminus, the 263-residue chain is Serine protease ami (263 aa).

An N-terminal signal peptide occupies residues 1-21; sequence MNISRVLFAVVLVLTVSTYEC. N-linked (GlcNAc...) asparagine glycosylation is present at Asn2. The propeptide at 22-26 is activation peptide; that stretch reads RPRGR. Residues 27-254 enclose the Peptidase S1 domain; it reads ILGGQDSKEK…YKSWIMETMY (228 aa). Cys52 and Cys68 are disulfide-bonded. The active-site Charge relay system is the His67. Residues Asn73, Asn74, and Asn108 are each glycosylated (N-linked (GlcNAc...) asparagine). The Charge relay system role is filled by Asp115. 3 disulfides stabilise this stretch: Cys149-Cys215, Cys180-Cys196, and Cys205-Cys230. The active-site Charge relay system is the Ser209. A glycan (N-linked (GlcNAc...) asparagine) is linked at Asn255.

It belongs to the peptidase S1 family. In terms of tissue distribution, in the embryo, localizes to paraxial regions at the neurula stage and anterior ventral regions at the tailbud stage. From the late tailbud to tadpole stage, expressed along the forming blood vessels including the anterior cardinal veins, posterior cardinal veins, intersomitic veins, dorsal longitudinal anastomosing vessel, dorsal aorta, pronephric sinus and most prominently around the vascular vitelline network, where expression shows left-right asymmetry in the stage 42 embryo. Localizes to endothelial cells. In adults, shows highest expression in liver with moderate levels of expression in the fat body, lung, gut and vessels. Weakly expressed in adult heart, muscle, testis and ovary.

The protein localises to the secreted. Functionally, probable serine protease. The chain is Serine protease ami from Xenopus laevis (African clawed frog).